The primary structure comprises 236 residues: tRNA (guanine-N(1)-)-methyltransferase (236 aa).

Residues glycine 110 and 129 to 134 (LGDFVL) contribute to the S-adenosyl-L-methionine site.

It belongs to the RNA methyltransferase TrmD family. As to quaternary structure, homodimer.

Its subcellular location is the cytoplasm. The catalysed reaction is guanosine(37) in tRNA + S-adenosyl-L-methionine = N(1)-methylguanosine(37) in tRNA + S-adenosyl-L-homocysteine + H(+). In terms of biological role, specifically methylates guanosine-37 in various tRNAs. The sequence is that of tRNA (guanine-N(1)-)-methyltransferase from Clostridium perfringens (strain SM101 / Type A).